A 506-amino-acid polypeptide reads, in one-letter code: TOM1-like protein 3 (506 aa).

A VHS domain is found at 12–141 (ATNDMLIGPD…ELRSAGIEFP (130 aa)). Residues 180 to 268 (DASALSMEEI…VLQHHDDKAK (89 aa)) form the GAT domain. Disordered stretches follow at residues 266-328 (KAKG…PPSS), 351-384 (ETFE…SKSP), and 398-477 (EQLP…PEDI). Positions 288–298 (DDDDDESDDDF) are enriched in acidic residues. Ser294 bears the Phosphoserine mark. Over residues 358 to 368 (PPSTSQSSNHD) the composition is skewed to polar residues. Residue Ser383 is modified to Phosphoserine. Polar residues predominate over residues 450–460 (QSRNLSLNPTA). The span at 468–477 (PKKDDKPEDI) shows a compositional bias: basic and acidic residues.

Belongs to the TOM1 family. In terms of tissue distribution, preferentially expressed in cauline leaves.

The protein resides in the membrane. Its function is as follows. Might contribute to the loading of the ESCRT machinery. The polypeptide is TOM1-like protein 3 (Arabidopsis thaliana (Mouse-ear cress)).